The chain runs to 172 residues: uncharacterized protein (172 aa).

Residues 3 to 171 enclose the PfpI endopeptidase domain; it reads KKVAIILADE…FNREIVKKLE (169 aa).

This sequence belongs to the peptidase C56 family.

This is an uncharacterized protein from Staphylococcus epidermidis (strain ATCC 35984 / DSM 28319 / BCRC 17069 / CCUG 31568 / BM 3577 / RP62A).